A 374-amino-acid chain; its full sequence is Alcohol dehydrogenase class-3 (374 aa).

The residue at position 2 (Ala-2) is an N-acetylalanine. Cys-45, His-67, Cys-97, Cys-100, Cys-103, Cys-111, and Cys-174 together coordinate Zn(2+). Lys-233 carries the post-translational modification N6-succinyllysine. Ser-247 is subject to Phosphoserine. Lys-315 bears the N6-succinyllysine mark. 2 positions are modified to phosphoserine: Ser-324 and Ser-351.

The protein belongs to the zinc-containing alcohol dehydrogenase family. Class-III subfamily. In terms of assembly, homodimer. Requires Zn(2+) as cofactor.

The protein resides in the cytoplasm. It carries out the reaction a primary alcohol + NAD(+) = an aldehyde + NADH + H(+). The catalysed reaction is a secondary alcohol + NAD(+) = a ketone + NADH + H(+). The enzyme catalyses S-(hydroxymethyl)glutathione + NADP(+) = S-formylglutathione + NADPH + H(+). It catalyses the reaction S-(hydroxymethyl)glutathione + NAD(+) = S-formylglutathione + NADH + H(+). It carries out the reaction 20-oxo-(5Z,8Z,11Z,14Z)-eicosatetraenoate + NAD(+) + H2O = (5Z,8Z,11Z,14Z)-eicosatetraenedioate + NADH + 2 H(+). The catalysed reaction is 20-hydroxy-(5Z,8Z,11Z,14Z)-eicosatetraenoate + NAD(+) = 20-oxo-(5Z,8Z,11Z,14Z)-eicosatetraenoate + NADH + H(+). The enzyme catalyses S-nitrosoglutathione + NADH + H(+) = S-(hydroxysulfenamide)glutathione + NAD(+). Catalyzes the oxidation of long-chain primary alcohols and the oxidation of S-(hydroxymethyl) glutathione. Also oxidizes long chain omega-hydroxy fatty acids, such as 20-HETE, producing both the intermediate aldehyde, 20-oxoarachidonate and the end product, a dicarboxylic acid, (5Z,8Z,11Z,14Z)-eicosatetraenedioate. Class-III ADH is remarkably ineffective in oxidizing ethanol. Required for clearance of cellular formaldehyde, a cytotoxic and carcinogenic metabolite that induces DNA damage. Also acts as a S-nitroso-glutathione reductase by catalyzing the NADH-dependent reduction of S-nitrosoglutathione, thereby regulating protein S-nitrosylation. This is Alcohol dehydrogenase class-3 from Oryctolagus cuniculus (Rabbit).